Consider the following 343-residue polypeptide: NADH-quinone oxidoreductase subunit H (343 aa).

The next 8 helical transmembrane spans lie at 19–39 (VAWT…GVAY), 89–109 (ALFI…WAVI), 124–144 (LLYV…AGWA), 158–178 (AAQI…VLMA), 198–218 (WYLW…VAET), 257–277 (ILVA…PVAF), 279–299 (PDGI…FLWF), and 314–334 (LGWK…GGMM).

The protein belongs to the complex I subunit 1 family. NDH-1 is composed of 14 different subunits. Subunits NuoA, H, J, K, L, M, N constitute the membrane sector of the complex.

The protein localises to the cell inner membrane. The catalysed reaction is a quinone + NADH + 5 H(+)(in) = a quinol + NAD(+) + 4 H(+)(out). Functionally, NDH-1 shuttles electrons from NADH, via FMN and iron-sulfur (Fe-S) centers, to quinones in the respiratory chain. The immediate electron acceptor for the enzyme in this species is believed to be ubiquinone. Couples the redox reaction to proton translocation (for every two electrons transferred, four hydrogen ions are translocated across the cytoplasmic membrane), and thus conserves the redox energy in a proton gradient. This subunit may bind ubiquinone. In Thiobacillus denitrificans (strain ATCC 25259 / T1), this protein is NADH-quinone oxidoreductase subunit H.